Here is a 215-residue protein sequence, read N- to C-terminus: Uracil-DNA glycosylase (215 aa).

Residue D59 is the Proton acceptor of the active site.

This sequence belongs to the uracil-DNA glycosylase (UDG) superfamily. UNG family.

It is found in the cytoplasm. It catalyses the reaction Hydrolyzes single-stranded DNA or mismatched double-stranded DNA and polynucleotides, releasing free uracil.. In terms of biological role, excises uracil residues from the DNA which can arise as a result of misincorporation of dUMP residues by DNA polymerase or due to deamination of cytosine. The protein is Uracil-DNA glycosylase of Aliarcobacter butzleri (strain RM4018) (Arcobacter butzleri).